A 977-amino-acid polypeptide reads, in one-letter code: Aspartate, glycine, lysine and serine-rich protein (977 aa).

The tract at residues 23 to 116 (GVLPDVDSGF…PITNLGSSTS (94 aa)) is disordered. Basic and acidic residues predominate over residues 37–50 (EETKSEPKQPDTKP). The span at 51–63 (EQPSVSKPDSSVN) shows a compositional bias: polar residues. N136 is a glycosylation site (N-linked (GlcNAc...) asparagine). 2 disordered regions span residues 246 to 767 (AGGG…TSRG) and 780 to 922 (GGGK…GSGL). Residues 251-278 (YYSDSSDSSDSDSSGSDSSESGSSESGS) are compositionally biased toward low complexity. Polar residues predominate over residues 309–325 (NGSPDNGTPGSGSSRYT). A compositionally biased stretch (acidic residues) spans 410 to 427 (LEDELLGSDSSDEDDIDD). Gly residues predominate over residues 428-443 (GLGGLGLGAGPGGPGG). 2 stretches are compositionally biased toward basic residues: residues 447–457 (TPKHKPRTDKK) and 465–540 (KRKP…VQRK). Basic and acidic residues predominate over residues 541–557 (QPREYKQESPEVEREHS). Over residues 572 to 583 (KILITSLTSSRG) the composition is skewed to low complexity. Gly residues predominate over residues 591–643 (DGSGSGNGGGDDGNGGGAGNGGGAGNGGGAGNGGGAGNGGGNGGGGNGGGGND). The segment covering 660-675 (EHRNRCEDDDDYREKC) has biased composition (basic and acidic residues). Over residues 700-724 (SGSSSSSSATESESSSTSTTPSTSS) the composition is skewed to low complexity. Composition is skewed to polar residues over residues 730 to 744 (ILSTLSGRSQKTRSG), 758 to 767 (SRPSVATSRG), and 785 to 801 (STGTTVTSKPSTGTSSA). Composition is skewed to low complexity over residues 803–814 (GLDLSGLLGQLG), 822–857 (GPKPDSKPSTGSPSTTSKPSTGSSSGPGLDLSGLLG), and 870–907 (KKPTASSKPTAPSTPSKSTGSSPGKGLDLSGLLGKLSP).

As to expression, component of the acid-insoluble and acid-soluble organic matrix of calcified layers of the shell (at protein level).

It is found in the secreted. This Lottia gigantea (Giant owl limpet) protein is Aspartate, glycine, lysine and serine-rich protein.